The following is a 371-amino-acid chain: Bifunctional enzyme IspD/IspF (371 aa).

Positions 1–212 are 2-C-methyl-D-erythritol 4-phosphate cytidylyltransferase; that stretch reads MLDISLIMLG…CLIPPSNEHF (212 aa). The 2-C-methyl-D-erythritol 2,4-cyclodiphosphate synthase stretch occupies residues 212–371; that stretch reads FTGIGFDAHE…ANLKYYDWTK (160 aa). Aspartate 218 and histidine 220 together coordinate a divalent metal cation. Residues 218-220 and 244-245 each bind 4-CDP-2-C-methyl-D-erythritol 2-phosphate; these read DAH and HS. Histidine 252 serves as a coordination point for a divalent metal cation. 4-CDP-2-C-methyl-D-erythritol 2-phosphate-binding positions include 266–268, 271–275, 342–345, phenylalanine 349, and arginine 352; these read DIG, FPDTD, and TTTE.

The protein in the N-terminal section; belongs to the IspD/TarI cytidylyltransferase family. IspD subfamily. This sequence in the C-terminal section; belongs to the IspF family. A divalent metal cation serves as cofactor.

The catalysed reaction is 2-C-methyl-D-erythritol 4-phosphate + CTP + H(+) = 4-CDP-2-C-methyl-D-erythritol + diphosphate. It catalyses the reaction 4-CDP-2-C-methyl-D-erythritol 2-phosphate = 2-C-methyl-D-erythritol 2,4-cyclic diphosphate + CMP. It participates in isoprenoid biosynthesis; isopentenyl diphosphate biosynthesis via DXP pathway; isopentenyl diphosphate from 1-deoxy-D-xylulose 5-phosphate: step 2/6. The protein operates within isoprenoid biosynthesis; isopentenyl diphosphate biosynthesis via DXP pathway; isopentenyl diphosphate from 1-deoxy-D-xylulose 5-phosphate: step 4/6. Its function is as follows. Bifunctional enzyme that catalyzes the formation of 4-diphosphocytidyl-2-C-methyl-D-erythritol from CTP and 2-C-methyl-D-erythritol 4-phosphate (MEP) (IspD), and catalyzes the conversion of 4-diphosphocytidyl-2-C-methyl-D-erythritol 2-phosphate (CDP-ME2P) to 2-C-methyl-D-erythritol 2,4-cyclodiphosphate (ME-CPP) with a corresponding release of cytidine 5-monophosphate (CMP) (IspF). This chain is Bifunctional enzyme IspD/IspF, found in Campylobacter curvus (strain 525.92).